The sequence spans 247 residues: V-type proton ATPase subunit D (247 aa).

This sequence belongs to the V-ATPase D subunit family. In terms of assembly, V-ATPase is a heteromultimeric enzyme made up of two complexes: the ATP-hydrolytic V1 complex and the proton translocation V0 complex. The V1 complex consists of three catalytic AB heterodimers that form a heterohexamer, three peripheral stalks each consisting of EG heterodimers, one central rotor including subunits D and F, and the regulatory subunits C and H. The proton translocation complex V0 consists of the proton transport subunit a, a ring of proteolipid subunits c9c'', rotary subunit d, subunits e and f, and the accessory subunits ATP6AP1/Ac45 and ATP6AP2/PRR. Interacts with SNX10.

The protein resides in the membrane. It is found in the cytoplasmic vesicle. It localises to the clathrin-coated vesicle membrane. The protein localises to the cytoplasm. Its subcellular location is the cytoskeleton. The protein resides in the microtubule organizing center. It is found in the centrosome. It localises to the cell projection. The protein localises to the cilium. Functionally, subunit of the V1 complex of vacuolar(H+)-ATPase (V-ATPase), a multisubunit enzyme composed of a peripheral complex (V1) that hydrolyzes ATP and a membrane integral complex (V0) that translocates protons. V-ATPase is responsible for acidifying and maintaining the pH of intracellular compartments and in some cell types, is targeted to the plasma membrane, where it is responsible for acidifying the extracellular environment. May play a role in cilium biogenesis through regulation of the transport and the localization of proteins to the cilium. This is V-type proton ATPase subunit D (Atp6v1d) from Mus musculus (Mouse).